Here is a 108-residue protein sequence, read N- to C-terminus: MKKKDRDSVFHRNIEIFITILINVVILKSFLLISSWVILVLLLVINDLPMYCYHHSLTYFLGCSKQTYFHRLGYPMQKLRHLLYFYYCYFLPRWKPRRRLTYHRYHPK.

A helical transmembrane segment spans residues 25–45 (VILKSFLLISSWVILVLLLVI).

Its subcellular location is the membrane. This is an uncharacterized protein from Saccharomyces cerevisiae (strain ATCC 204508 / S288c) (Baker's yeast).